The sequence spans 245 residues: DNA polymerase sliding clamp 1 (245 aa).

The protein belongs to the PCNA family. The subunits circularize to form a toroid; DNA passes through its center. Replication factor C (RFC) is required to load the toroid on the DNA. Forms a dimeric complex with PCNA3 and a trimeric complex with PCNA2 and PCNA3; does not form homotrimers.

Sliding clamp subunit that acts as a moving platform for DNA processing. Responsible for tethering the catalytic subunit of DNA polymerase and other proteins to DNA during high-speed replication. The trimeric complex inhibits DNA ligase and both 3'-5' and 5'-3' activity of Hel308 (Hjm) helicase, but stimulates Hjc, the Holliday junction cleavage enzyme. This Sulfurisphaera tokodaii (strain DSM 16993 / JCM 10545 / NBRC 100140 / 7) (Sulfolobus tokodaii) protein is DNA polymerase sliding clamp 1.